The chain runs to 540 residues: 2-isopropylmalate synthase (540 aa).

Positions 8 to 273 (VLIFDTTLRD…FFGRDEDSPT (266 aa)) constitute a Pyruvate carboxyltransferase domain. Mn(2+) is bound by residues D17, H208, H210, and N244. Residues 408–540 (QLKLVQVSCG…MAQLDSSPVH (133 aa)) form a regulatory domain region.

It belongs to the alpha-IPM synthase/homocitrate synthase family. LeuA type 1 subfamily. As to quaternary structure, homodimer. Mn(2+) serves as cofactor.

The protein resides in the cytoplasm. It carries out the reaction 3-methyl-2-oxobutanoate + acetyl-CoA + H2O = (2S)-2-isopropylmalate + CoA + H(+). It functions in the pathway amino-acid biosynthesis; L-leucine biosynthesis; L-leucine from 3-methyl-2-oxobutanoate: step 1/4. Its function is as follows. Catalyzes the condensation of the acetyl group of acetyl-CoA with 3-methyl-2-oxobutanoate (2-ketoisovalerate) to form 3-carboxy-3-hydroxy-4-methylpentanoate (2-isopropylmalate). The chain is 2-isopropylmalate synthase from Synechococcus sp. (strain CC9311).